The chain runs to 148 residues: Large ribosomal subunit protein uL13 (148 aa).

Positions 128 to 148 are disordered; sequence PEHPHQAQNPQPFEINAKVEK.

It belongs to the universal ribosomal protein uL13 family. As to quaternary structure, part of the 50S ribosomal subunit.

Functionally, this protein is one of the early assembly proteins of the 50S ribosomal subunit, although it is not seen to bind rRNA by itself. It is important during the early stages of 50S assembly. The protein is Large ribosomal subunit protein uL13 of Saccharopolyspora erythraea (strain ATCC 11635 / DSM 40517 / JCM 4748 / NBRC 13426 / NCIMB 8594 / NRRL 2338).